The primary structure comprises 649 residues: Beta-galactosidase-1-like protein 3 (649 aa).

Glu203 acts as the Proton donor in catalysis. Glu277 serves as the catalytic Nucleophile.

This sequence belongs to the glycosyl hydrolase 35 family.

The sequence is that of Beta-galactosidase-1-like protein 3 (Glb1l3) from Mus musculus (Mouse).